Reading from the N-terminus, the 700-residue chain is Pyrroloquinoline quinone transporter (700 aa).

Residues 1–23 (MKIFSVRQTVLPALLVLSPVVFA) form the signal peptide. The region spanning 39 to 157 (SELDTPAAVS…SGGVMNVTTQ (119 aa)) is the TBDR plug domain. The next 24 beta stranded transmembrane spans lie at 132–136 (NVEVL), 150–160 (GVMNVTTQTGQ), 162–171 (PPTIEASSYY), 177–186 (WRYGLKATGA), 195–204 (DVDYTVSTTR), 220–227 (LANAKLGV), 233–241 (SKLSLIFNS), 280–288 (QAGLRYERS), 295–301 (MSVMMYA), 335–344 (GIDSRWTHRG), 350–358 (VTFTTGLNY), 398–405 (DPYLQTQW), 411–419 (LSLDAGVRY), 447–456 (WLPAGSLKYA), 464–468 (YLAAG), 500–509 (TIEIGSKTRI), 511–520 (DGLLSLALFQ), 549–556 (GAELAWDQ), 563–570 (RVNASWTW), 597–604 (MGFASIGY), 611–617 (YAGTEAR), 637–647 (LVGLFTGYKYN), 651–659 (LTVDLFGRV), and 689–697 (YGVGMNIAW). Residues 162–697 (PPTIEASSYY…NYGVGMNIAW (536 aa)) enclose the TBDR beta-barrel domain. The short motif at 680–700 (YYEPSPGRNYGVGMNIAWRFE) is the TonB C-terminal box element.

The protein belongs to the TonB-dependent receptor family.

The protein localises to the cell outer membrane. In terms of biological role, mediates the TonB-dependent high affinity transport across the outer membrane of pyrroloquinoline quinone (PQQ), a redox cofactor required for the activity of Gcd and Asd dehydrogenases. The uptake process is energised via the TonB-ExbBD complex. Not involved in the transport of an iron-containing substrate under laboratory conditions. The sequence is that of Pyrroloquinoline quinone transporter from Escherichia coli (strain K12).